A 992-amino-acid polypeptide reads, in one-letter code: Epstein-Barr nuclear antigen 6 (992 aa).

Residues 1–70 form a disordered region; the sequence is MESFEGQGDS…SRGDENRGWM (70 aa). A compositionally biased stretch (basic and acidic residues) spans 12–31; the sequence is QSPDNERGDNVQTTGEHDQD. Positions 130–159 are interaction with host PIM1; it reads LILDSGLDTQHILCFVMAARQRLQDIRRGP. Disordered regions lie at residues 355–905, 931–954, and 967–992; these read ATGG…DSMA, PLDI…PARC, and DNSE…SELD. The span at 381-391 shows a compositional bias: acidic residues; that stretch reads VELESSDDELP. The span at 445–461 shows a compositional bias: polar residues; it reads AQSTPERPGPSEQSSVT. Pro residues predominate over residues 479-495; it reads QPPPVPKPVPVKPTPPP. Acidic residues predominate over residues 506-520; that stretch reads YDDDVIEVIDVETTE. A 1-1; approximate repeat occupies 551–555; that stretch reads PPTVS. The 12 X 5 AA approximate tandem repeats of P-P-A-A-G stretch occupies residues 551–610; the sequence is PPTVSPSDTGPPAVGPPAAGPPAAGPPAAGPPAAGPPAAGPPAAGPRILAPLSAGPPAAG. Residues 556-560 form a 2-1; approximate repeat; sequence PSDTG. Residues 561–565 form a 3-1; approximate repeat; that stretch reads PPAVG. The span at 563-594 shows a compositional bias: pro residues; sequence AVGPPAAGPPAAGPPAAGPPAAGPPAAGPPAA. 6 tandem repeats follow at residues 566–570, 571–575, 576–580, 581–585, 586–590, and 591–595. Residues 595–611 show a composition bias toward low complexity; it reads GPRILAPLSAGPPAAGP. A 10-1; approximate repeat occupies 596-600; sequence PRILA. The stretch at 601 to 605 is one 11-1; approximate repeat; that stretch reads PLSAG. A 12-1 repeat occupies 606–610; that stretch reads PPAAG. Composition is skewed to polar residues over residues 659–676 and 700–714; these read TQMQ…TQPT and IESS…TQPI. A compositionally biased stretch (basic and acidic residues) spans 715–724; sequence SHEEQPRYED. Low complexity-rich tracts occupy residues 738–764 and 772–781; these read AAQP…QGYQ and PYQGYQEPPA. Repeat copies occupy residues 741 to 753, 754 to 766, and 767 to 779. Residues 741-779 are 3 X 13 AA tandem repeats of P-[AP]-P-Q-A-P-Y-Q-G-Y-Q-E-P; sequence PAPQAPYQGYQEPPAPQAPYQGYQEPPPPQAPYQGYQEP. Over residues 845–857 the composition is skewed to polar residues; it reads DQVSQFPHLQSET. The segment covering 859 to 881 has biased composition (low complexity); that stretch reads PPRLQLSLVPLVSSSAPSWSSPQ. Residues 882-899 are compositionally biased toward pro residues; it reads PRAPIRPIPTRFPPPPMP.

It belongs to the herpesviridae EBNA-6 family. In terms of assembly, interacts with host CTPB1; this interaction leads to gene repression, but also seems to interfere with the repressive function of CtBP pre-bound to DNA, leading to EBNA6 mediated up-regulation of many host genes. Interacts with host MYC; this interaction enhances MYC stability. Interacts (via N-terminus) with host RBPJ. Interacts (via N-terminus) with host histone H2AX; this interaction facilitates H2AX proteasomal degradation. Interacts with host TP73; this interaction inhibits TP73-mediated apoptotic pathway. Interacts (via N-terminus) with host PIM1; this interaction upregulates and stabilizes PIM1 and induces cell proliferation by inhibiting the growth suppressive properties of p21.

The protein resides in the host nucleus. The protein localises to the host nucleus matrix. Plays an essential role for the activation and immortalization of human B-cells. Represses transcription of viral promoters TP1 and Cp through interaction with host RBPJ, and inhibits EBNA2-mediated activation of these promoters. Targets host chromatin through interactions with host transcription factors, especially RBPJ and IRF4. Alternatively, EBNA6 also regulates the transcription of the EBV oncogene LMP1 in a cell cycle-dependent manner. Modulates the activity of several host proteins involved in cell cycle regulation including host cyclin A, MYC, RB, p21 and p27 mainly through binding to the host SCF(SKP2) complex. Inhibits the promoter of host H2AX and targets H2AX to proteasomal degradation in order to promote latency and cell proliferation. Upregulates host PIM1 expression and stabilization. Potentiates PIM1 to promote cell proliferation by inhibiting the growth suppressive properties of p21. In Epstein-Barr virus (strain B95-8) (HHV-4), this protein is Epstein-Barr nuclear antigen 6 (EBNA6).